The following is a 63-amino-acid chain: Large ribosomal subunit protein uL29 (63 aa).

Belongs to the universal ribosomal protein uL29 family.

The chain is Large ribosomal subunit protein uL29 from Bordetella pertussis (strain Tohama I / ATCC BAA-589 / NCTC 13251).